A 390-amino-acid chain; its full sequence is MKLIQKNIEKNGSGWITMCPEEPEDMWHLYNILQVGDQLKASTVRRVVKVGATGSTSGSRVVMKLRILVENMDFDTKAAQLHIKGRTTEYHPEVKMGSYHTLDLELHRNFTLYKNEWDAFALDRVDAACNPSRNAEIGAVVLDEGLANICLITDYMTILRQRIDQVIPRKRRGDSSAYQKGLDKFYDSVFQSINSEFDFDKLKVVILASPGFVARGLYDYIFSMAVKLDLKQIVKSKNKFVILHSSTGHIHSLNEILKDPAVESKLADTKYVQEIRVLNKFYDVMNEDDRKAWYGPNHVLKAFELGAIGELLISDSLFRSSDIATRKKWVSLVEGVKEINCPVYIFSSLHESGKQLDLLSGIAAILTYPVDEEDISEDEEDEESQNFEHS.

This sequence belongs to the eukaryotic release factor 1 family. Pelota subfamily. In terms of assembly, component of the Dom34-Hbs1 complex, also named Pelota-HBS1L complex, composed of dom34 and hbs1. The cofactor is a divalent metal cation.

The protein localises to the cytoplasm. In terms of biological role, component of the Dom34-Hbs1 complex, a complex that recognizes stalled ribosomes and triggers the No-Go Decay (NGD) pathway. In the Dom34-Hbs1 complex, dom34 recognizes ribosomes stalled at the 3' end of an mRNA and engages stalled ribosomes by destabilizing mRNA in the mRNA channel. Following ribosome-binding, the Dom34-Hbs1 complex promotes the disassembly of stalled ribosomes, followed by degradation of damaged mRNAs as part of the NGD pathway. The polypeptide is Protein dom34 (Schizosaccharomyces pombe (strain 972 / ATCC 24843) (Fission yeast)).